Consider the following 292-residue polypeptide: Protease HtpX homolog (292 aa).

The next 2 helical transmembrane spans lie at 4–24 (IFLFIVTNLAILVMLSITLRL) and 42–62 (ALLVLSAVIGFGGSLISLAMS). His147 serves as a coordination point for Zn(2+). Glu148 is a catalytic residue. His151 is a Zn(2+) binding site. The next 2 helical transmembrane spans lie at 158–178 (VTLALIQGVVNTFVIFLSRII) and 198–218 (FVTSLVAQLVLGILATIIVMW). Position 224 (Glu224) interacts with Zn(2+).

Belongs to the peptidase M48B family. Zn(2+) is required as a cofactor.

It is found in the cell inner membrane. The polypeptide is Protease HtpX homolog (Nitrosomonas eutropha (strain DSM 101675 / C91 / Nm57)).